The chain runs to 191 residues: PBAN-type neuropeptides (191 aa).

Residues 1 to 17 form the signal peptide; that stretch reads MFSPLLFFAVSISCVLA. Leu-44 is modified (leucine amide). The propeptide occupies 48–91; sequence SLRISTEDNRQAFFKLLEAADALKYYYDRLPYEMQADEPETRVT. 4 positions are modified to leucine amide: Leu-100, Leu-120, Leu-156, and Leu-166. Positions 169 to 191 are excised as a propeptide; that stretch reads ELSYDMLPSKLRLVRSTNRTQST.

This sequence belongs to the pyrokinin family. Expressed in the subesophageal ganglion.

The protein resides in the secreted. In terms of biological role, a hormone that controls sex pheromone production in females and pheromone responsiveness in male. This is PBAN-type neuropeptides from Spodoptera littoralis (Egyptian cotton leafworm).